Consider the following 181-residue polypeptide: Transcription termination/antitermination protein NusG (181 aa).

The region spanning 130 to 161 (PGELVRVSDGPFADFNGVVEEVDYEKSRLKVS) is the KOW domain.

The protein belongs to the NusG family. Monomer. Interacts with the transcription termination factor Rho and with RNA polymerase.

Its function is as follows. Participates in transcription elongation, termination and antitermination. In the absence of Rho, increases the rate of transcription elongation by the RNA polymerase (RNAP), probably by partially suppressing pausing. In the presence of Rho, modulates most Rho-dependent termination events by interacting with the RNAP to render the complex more susceptible to the termination activity of Rho. May be required to overcome a kinetic limitation of Rho to function at certain terminators. Also involved in ribosomal RNA transcriptional antitermination. This is Transcription termination/antitermination protein NusG from Yersinia pestis.